Reading from the N-terminus, the 654-residue chain is Translation factor GUF1, mitochondrial (654 aa).

Residues 57–237 (ENYRNFSIVA…SVIKNIPSPV (181 aa)) enclose the tr-type G domain. Residues 66-73 (AHVDHGKS), 130-134 (DTPGH), and 184-187 (NKID) each bind GTP.

The protein belongs to the TRAFAC class translation factor GTPase superfamily. Classic translation factor GTPase family. LepA subfamily.

It is found in the mitochondrion inner membrane. The catalysed reaction is GTP + H2O = GDP + phosphate + H(+). Its function is as follows. Promotes mitochondrial protein synthesis. May act as a fidelity factor of the translation reaction, by catalyzing a one-codon backward translocation of tRNAs on improperly translocated ribosomes. Binds to mitochondrial ribosomes in a GTP-dependent manner. The sequence is that of Translation factor GUF1, mitochondrial from Candida albicans (strain WO-1) (Yeast).